We begin with the raw amino-acid sequence, 109 residues long: Nucleoid-associated protein swp_1717 (109 aa).

Residues 88-109 (QKDKMAEVTGGMQLPPGMKMPF) are disordered.

The protein belongs to the YbaB/EbfC family. In terms of assembly, homodimer.

It is found in the cytoplasm. It localises to the nucleoid. Its function is as follows. Binds to DNA and alters its conformation. May be involved in regulation of gene expression, nucleoid organization and DNA protection. This chain is Nucleoid-associated protein swp_1717, found in Shewanella piezotolerans (strain WP3 / JCM 13877).